A 312-amino-acid chain; its full sequence is RNA pseudouridylate synthase domain-containing protein 1 (312 aa).

Methionine 1 bears the N-acetylmethionine mark. The active site involves aspartate 67. The tract at residues 256–298 (ATPDPDPEDRGPRPGSPSALLPGPGRPPPPPTKPPETEAQRGP) is disordered. A compositionally biased stretch (pro residues) spans 279 to 289 (PGRPPPPPTKP).

The protein belongs to the pseudouridine synthase RluA family.

This is RNA pseudouridylate synthase domain-containing protein 1 (RPUSD1) from Homo sapiens (Human).